The primary structure comprises 390 residues: MLTSDLSNDLANPLPLAQALIRRPSVTPIDAGALDVMQAALEQLGFTCRRYPFGEVDNLYARRGTASPCFLFAGHTDVVPPGDDDAWRKPPFGAEAEDGVLWGRGAADMKGAIAAMVASVQRFLDTGEPKGSIAFLITGDEEGPAIHGTKAVLEALADEGETFDHCLVGEPTNPNVLGDTIKSGRRGSLNCTLTVTGRQGHVAYPERAENPIPALLDLLGRLLARKLDDGVPPFQPSNLEVTSVDVGNPTTNVIPAAATARFNIRFNIAHNGDALSDWIRSEVAKIDLDFDGRIEADIHVTGEAFLTPAGPFTTLLQDCVEAETGRRPALTTGGGTSDARFIQLYAPVAEFGLVGATMHQVDERVPVSDIETLTAIYTRILKGYFKDFPA.

H75 lines the Zn(2+) pocket. D77 is an active-site residue. D108 lines the Zn(2+) pocket. The active-site Proton acceptor is the E141. Zn(2+) contacts are provided by E142, E170, and H359.

It belongs to the peptidase M20A family. DapE subfamily. Homodimer. The cofactor is Zn(2+). It depends on Co(2+) as a cofactor.

The catalysed reaction is N-succinyl-(2S,6S)-2,6-diaminopimelate + H2O = (2S,6S)-2,6-diaminopimelate + succinate. Its pathway is amino-acid biosynthesis; L-lysine biosynthesis via DAP pathway; LL-2,6-diaminopimelate from (S)-tetrahydrodipicolinate (succinylase route): step 3/3. Its function is as follows. Catalyzes the hydrolysis of N-succinyl-L,L-diaminopimelic acid (SDAP), forming succinate and LL-2,6-diaminopimelate (DAP), an intermediate involved in the bacterial biosynthesis of lysine and meso-diaminopimelic acid, an essential component of bacterial cell walls. The polypeptide is Succinyl-diaminopimelate desuccinylase (Maricaulis maris (strain MCS10) (Caulobacter maris)).